We begin with the raw amino-acid sequence, 252 residues long: Chaperone protein AggD (252 aa).

An N-terminal signal peptide occupies residues 1-22; that stretch reads MKIRRIVSTIAIALSVFTFAHA.

Belongs to the periplasmic pilus chaperone family.

The protein localises to the periplasm. Involved in the biogenesis of the AAF/I fimbriae. The sequence is that of Chaperone protein AggD (aggD) from Escherichia coli.